We begin with the raw amino-acid sequence, 378 residues long: UPF0754 membrane protein Exig_0680 (378 aa).

The next 2 helical transmembrane spans lie at 5-25 and 357-377; these read VDLV…GAVT and ITWL…ILLI.

This sequence belongs to the UPF0754 family.

The protein localises to the cell membrane. This is UPF0754 membrane protein Exig_0680 from Exiguobacterium sibiricum (strain DSM 17290 / CCUG 55495 / CIP 109462 / JCM 13490 / 255-15).